The following is a 1044-amino-acid chain: R3H domain-containing protein 2 (1044 aa).

Disordered stretches follow at residues 23–71 (EESV…AKSN) and 106–147 (SCPS…QEYT). Basic and acidic residues predominate over residues 36–56 (PSKEDVEKEGEENGLRQETQR). S37 is modified (phosphoserine). Over residues 58–71 (TSSHGHARKRAKSN) the composition is skewed to basic residues. The segment covering 109 to 143 (SDKEEEKSTKDVSEKEDKDKSKEKVPRKMLSRDSS) has biased composition (basic and acidic residues). S143 is subject to Phosphoserine. An R3H domain is found at 169–232 (RMMLLKLEQE…AVIINKTSST (64 aa)). Residues 233-303 (RIPEQRFSEH…VRERIFARET (71 aa)) enclose the SUZ domain. 2 stretches are compositionally biased toward basic and acidic residues: residues 261–270 (DASMDRDDNQ) and 277–288 (DGRRSKSIEERE). Disordered stretches follow at residues 261 to 288 (DASM…EERE), 320 to 408 (SSSS…LSRP), 433 to 485 (CTAQ…FSPS), 502 to 533 (MAED…LFQP), 551 to 600 (GQPL…SNQQ), 729 to 770 (GTSP…SPSG), and 807 to 848 (GQKP…SLSN). Residues 338–349 (SRTSSSRQSSTD) are compositionally biased toward low complexity. Residues S362, S365, and S381 each carry the phosphoserine modification. Residues 433 to 449 (CTAQQQQQQQQQQQQLP) are compositionally biased toward low complexity. Polar residues-rich tracts occupy residues 509–521 (PFGQ…QGST) and 554–572 (LPTS…QQVL). The span at 757–770 (PQMSQQYSGVSPSG) shows a compositional bias: low complexity. Residues 818-848 (GSPQANAQMGSSPVTSPTQSPAPSPVTSLSN) show a composition bias toward polar residues. Residues S921 and S923 each carry the phosphoserine modification. Phosphothreonine is present on residues T924 and T928.

It is found in the nucleus. The protein is R3H domain-containing protein 2 (R3hdm2) of Mus musculus (Mouse).